The primary structure comprises 538 residues: Probable inorganic phosphate transporter 1-4 (538 aa).

Residues 1–23 (MAGELKVLNALDSAKTQWYHFTA) are Cytoplasmic-facing. Residues 24–44 (IVIAGMGFFTDAYDLFSISLV) form a helical membrane-spanning segment. Residues 45-69 (TKLLGRIYYFNPASKSPGSLPPNVS) are Extracellular-facing. The chain crosses the membrane as a helical span at residues 70–90 (AAVNGVAFCGTLAGQLFFGWL). The Cytoplasmic segment spans residues 91–98 (GDKMGRKK). A helical membrane pass occupies residues 99 to 119 (VYGMTLMLMVICCLASGLSFG). Over 120–123 (SSAK) the chain is Extracellular. A helical membrane pass occupies residues 124 to 144 (GVMATLCFFRFWLGFGIGGDY). Residues 145–163 (PLSATIMSEYANKRTRGAF) are Cytoplasmic-facing. The helical transmembrane segment at 164 to 184 (IAAVFAMQGFGNLTGGIVAII) threads the bilayer. At 185 to 210 (VSAAFKARFDAPAYRDDRAGSTVPQA) the chain is on the extracellular side. Residues 211 to 231 (DYAWRIVLMFGAIPALLTYYW) form a helical membrane-spanning segment. The Cytoplasmic segment spans residues 232–294 (RMKMPETARY…RQFLRRHGRH (63 aa)). Residues 295–315 (LLGTTVCWFVLDIAFYSSNLF) traverse the membrane as a helical segment. Residues 316 to 346 (QKDIYTAVQWLPKADTMSALEEMFKISRAQT) lie on the Extracellular side of the membrane. A helical transmembrane segment spans residues 347-367 (LVALCGTIPGYWFTVFFIDII). The Cytoplasmic portion of the chain corresponds to 368–369 (GR). A helical transmembrane segment spans residues 370–390 (FVIQLGGFFFMTAFMLGLAVP). At 391 to 396 (YHHWTT) the chain is on the extracellular side. A helical membrane pass occupies residues 397–417 (PGNHIGFVVMYAFTFFFANFG). The Cytoplasmic portion of the chain corresponds to 418-440 (PNSTTFIVPAEIFPARLRSTCHG). The chain crosses the membrane as a helical span at residues 441-461 (ISAAAGKAGAIVGSFGFLYAA). The Extracellular segment spans residues 462-481 (QSTDASKTDAGYPPGIGVRN). The chain crosses the membrane as a helical span at residues 482–502 (SLFFLAGCNVIGFFFTFLVPE). The Cytoplasmic portion of the chain corresponds to 503–538 (SKGKSLEELSGENEDDDDVPEAPSTADHRTAPAPPA). The tract at residues 507-538 (SLEELSGENEDDDDVPEAPSTADHRTAPAPPA) is disordered. A compositionally biased stretch (acidic residues) spans 511–522 (LSGENEDDDDVP).

It belongs to the major facilitator superfamily. Phosphate:H(+) symporter (TC 2.A.1.9) family.

It localises to the membrane. Functionally, high-affinity transporter for external inorganic phosphate. This is Probable inorganic phosphate transporter 1-4 (PHT1-4) from Oryza sativa subsp. indica (Rice).